Reading from the N-terminus, the 395-residue chain is Extracellular cysteine protease (395 aa).

An N-terminal signal peptide occupies residues 1-30; that stretch reads MKKKLSYMITIMLAFTLSLALGLFFNSAHA. The propeptide occupies 31-221; the sequence is DSLPQKNGAN…TLEYQSTRNE (191 aa). Catalysis depends on residues cysteine 245, histidine 341, and asparagine 362.

The protein belongs to the peptidase C47 family. In terms of processing, proteolytically cleaved.

The protein localises to the secreted. The protein resides in the cell wall. Its function is as follows. Cysteine protease able to cleave elastin, insulin, myoglobin, fibronectin, fibrinogen, HMW-kininogen, alpha-1-protease inhibitor and alpha-1-antitrypsin. Along with other extracellular proteases may contribute to the colonization and infection of human tissues. This is Extracellular cysteine protease (ecpA) from Staphylococcus epidermidis (strain ATCC 35984 / DSM 28319 / BCRC 17069 / CCUG 31568 / BM 3577 / RP62A).